A 330-amino-acid polypeptide reads, in one-letter code: Taste receptor type 2 member 117 (330 aa).

Residues 1–16 (MKHFWKILSVISQSTL) lie on the Extracellular side of the membrane. Residues 17 to 37 (SVILIVELVIGIIGNGFMVLV) traverse the membrane as a helical segment. The Cytoplasmic segment spans residues 38-53 (HCMDWVKKKKMSLVNQ). A helical transmembrane segment spans residues 54–74 (ILTALSISRIFQLCLLFISLV). Residues 75–95 (INFSYTDLTTSSRMIQVMYNA) lie on the Extracellular side of the membrane. The N-linked (GlcNAc...) asparagine glycan is linked to N76. A helical transmembrane segment spans residues 96–116 (WILANHFSIWIATCLTVLYFL). Over 117 to 135 (KIANFSNSFFLYLKWRVEK) the chain is Cytoplasmic. The helical transmembrane segment at 136-156 (VVSVTLLVSLLLLILNILLTN) threads the bilayer. Residues 157–190 (LETDMWTNEYQRNISCSFSSHYYAKCHRQVLRLH) are Extracellular-facing. A glycan (N-linked (GlcNAc...) asparagine) is linked at N169. A helical membrane pass occupies residues 191-211 (IIFLSVPVVLSLSTFLLLIFS). At 212–239 (LWTHHKRMQQHVQGGRDARTTAHFKALQ) the chain is on the cytoplasmic side. A helical membrane pass occupies residues 240-260 (TVIAFFLLYSIFILSVLIQIW). The Extracellular portion of the chain corresponds to 261 to 269 (KYELLKKNL). The chain crosses the membrane as a helical span at residues 270–290 (FVVFCEVVYIAFPTFHSYILI). Over 291–330 (VGDMKLRQACLPLCIIAAEIQTTLCRNFRSLKYFRLCCIF) the chain is Cytoplasmic.

The protein belongs to the G-protein coupled receptor T2R family.

It is found in the membrane. Putative taste receptor which may play a role in the perception of bitterness. This is Taste receptor type 2 member 117 from Mus musculus (Mouse).